We begin with the raw amino-acid sequence, 425 residues long: Enolase (425 aa).

Gln-163 lines the (2R)-2-phosphoglycerate pocket. The active-site Proton donor is the Glu-205. Mg(2+) contacts are provided by Asp-242, Glu-285, and Asp-312. (2R)-2-phosphoglycerate contacts are provided by Lys-337, Arg-366, Ser-367, and Lys-388. The active-site Proton acceptor is the Lys-337.

The protein belongs to the enolase family. The cofactor is Mg(2+).

It is found in the cytoplasm. Its subcellular location is the secreted. The protein localises to the cell surface. The enzyme catalyses (2R)-2-phosphoglycerate = phosphoenolpyruvate + H2O. The protein operates within carbohydrate degradation; glycolysis; pyruvate from D-glyceraldehyde 3-phosphate: step 4/5. Functionally, catalyzes the reversible conversion of 2-phosphoglycerate (2-PG) into phosphoenolpyruvate (PEP). It is essential for the degradation of carbohydrates via glycolysis. The polypeptide is Enolase (Syntrophomonas wolfei subsp. wolfei (strain DSM 2245B / Goettingen)).